The sequence spans 1498 residues: ATP-binding cassette sub-family C member 6 (1498 aa).

Topologically, residues 1-37 (MNRGRSMATPGEQCAGLRVWNQTEQEPAAYHLLSLCF) are extracellular. A glycan (N-linked (GlcNAc...) asparagine) is linked at asparagine 21. Residues 38 to 58 (VRAASSWVPPMYLWVLGPIYL) form a helical membrane-spanning segment. The Cytoplasmic portion of the chain corresponds to 59–78 (LYIHRHGRCYLRMSHLFKTK). The chain crosses the membrane as a helical span at residues 79 to 99 (MVLGLALILLYTFNVAVPLWR). The Extracellular portion of the chain corresponds to 100-104 (IHQGV). Residues 105–125 (PQAPELLIHPTVWLTTMSFAT) form a helical membrane-spanning segment. Residues 126–137 (FLIHMERRKGVR) are Cytoplasmic-facing. A helical membrane pass occupies residues 138 to 155 (SSGVLFGYWLLCCILPGI). The Extracellular segment spans residues 156-173 (NTVQQASAGNFRQEPLHH). The chain crosses the membrane as a helical span at residues 174 to 194 (LATYLCLSLVVAELVLSCLVD). Residues 195–300 (QPPFFSEDSQ…RSQRGPLLRA (106 aa)) are Cytoplasmic-facing. A helical transmembrane segment spans residues 301-321 (IWRVFRSTFLLGTLSLVISDA). An ABC transmembrane type-1 1 domain is found at 309–592 (FLLGTLSLVI…LPFSVHCIVQ (284 aa)). Topologically, residues 322-347 (FRFAVPKLLSLFLEFMGDRNSSAWTG) are extracellular. N-linked (GlcNAc...) asparagine glycosylation occurs at asparagine 341. Residues 348-368 (WLLAVLMFAAACLQTLFEQQH) form a helical membrane-spanning segment. Topologically, residues 369–424 (MYRAKVLQMRLRTAITGLVYRKVLVLSSGSRKSSAAGDVVNLVSVDIQRLAESIIY) are cytoplasmic. Residues 425–445 (LNGLWLLFLWIFVCFVYLWQL) traverse the membrane as a helical segment. The Extracellular portion of the chain corresponds to 446–448 (LGP). Residues 449 to 469 (SALTAVAVFLSLLPLNFFITK) form a helical membrane-spanning segment. At 470 to 531 (KRGFHQEEQM…ALKTSTLLFS (62 aa)) the chain is on the cytoplasmic side. The helical transmembrane segment at 532 to 552 (VSLVSFQVSTFLVALVVFAVH) threads the bilayer. The Extracellular portion of the chain corresponds to 553 to 574 (TLVAEDNAMDAEKAFVTLTVLS). Residues 575 to 595 (ILNKAQAFLPFSVHCIVQARV) traverse the membrane as a helical segment. The Cytoplasmic segment spans residues 596-934 (SFDRLAAFLC…VKTTIYLSYL (339 aa)). Residues 627–851 (ISVHNGTFAW…NGALVGLLDG (225 aa)) enclose the ABC transporter 1 domain. 661–668 (GPVGAGKS) is an ATP binding site. The tract at residues 855–910 (PAGTHDAATSDDLGGFPGGGRPTCRPDRPRPTEAAPVKGRSTSEVQMEASLDDPEA) is disordered. Residues 935–955 (RAVGTPLCTYTLFLFLCQQVA) form a helical membrane-spanning segment. In terms of domain architecture, ABC transmembrane type-1 2 spans 942–1223 (CTYTLFLFLC…VVRSWTDLEN (282 aa)). The Extracellular portion of the chain corresponds to 956-992 (SFSQGYWLSLWADDPVVDGRQMHAALRGWVFGLLGCL). A helical transmembrane segment spans residues 993-1013 (QAIGLFASMAAVFLGGARASG). Topologically, residues 1014 to 1056 (LLFRSLLWDVARSPIGFFERTPVGNLLNRFSKETDTVDVDIPD) are cytoplasmic. Residues 1057 to 1077 (KLRSLLTYAFGLLEVGLAVTM) form a helical membrane-spanning segment. Position 1078 (alanine 1078) is a topological domain, extracellular. The chain crosses the membrane as a helical span at residues 1079–1099 (TPLAIVAILPLMVLYAGFQSL). Residues 1100 to 1170 (YVATSCQLRR…VADRWLATNL (71 aa)) lie on the Cytoplasmic side of the membrane. The helical transmembrane segment at 1171–1191 (ELLGNGLVFVAATCAVLSKAH) threads the bilayer. The Extracellular portion of the chain corresponds to 1192 to 1193 (LS). The chain crosses the membrane as a helical span at residues 1194-1214 (AGLVGFSVSAALQVTQTLQWV). The Cytoplasmic segment spans residues 1215 to 1498 (VRSWTDLENS…YRLAHESGLA (284 aa)). In terms of domain architecture, ABC transporter 2 spans 1260–1494 (IEFRDFGLRH…KGLFYRLAHE (235 aa)). Serine 1281 carries the phosphoserine modification. Residue 1294–1301 (GRTGAGKS) coordinates ATP.

This sequence belongs to the ABC transporter superfamily. ABCC family. Conjugate transporter (TC 3.A.1.208) subfamily. Post-translationally, glycosylated.

The protein localises to the basolateral cell membrane. It localises to the basal cell membrane. The catalysed reaction is an S-substituted glutathione(in) + ATP + H2O = an S-substituted glutathione(out) + ADP + phosphate + H(+). It catalyses the reaction leukotriene C4(in) + ATP + H2O = leukotriene C4(out) + ADP + phosphate + H(+). Its function is as follows. ATP-dependent transporter of the ATP-binding cassette (ABC) family that actively extrudes physiological compounds, and xenobiotics from cells. Mediates ATP-dependent transport of glutathione conjugates such as leukotriene-c4 (LTC4) and N-ethylmaleimide S-glutathione (NEM-GS) (in vitro), and an anionic cyclopentapeptide endothelin antagonist, BQ-123. May contribute to regulate the transport of organic compounds in testes across the blood-testis-barrier. Mediates the release of nucleoside triphosphates, predominantly ATP, into the circulation, where it is rapidly converted into AMP and the mineralization inhibitor inorganic pyrophosphate (PPi) by the ecto-enzyme ectonucleotide pyrophosphatase phosphodiesterase 1 (ENPP1), therefore playing a role in PPi homeostasis. This is ATP-binding cassette sub-family C member 6 (Abcc6) from Mus musculus (Mouse).